The chain runs to 431 residues: Tol-Pal system protein TolB (431 aa).

The N-terminal stretch at 1-26 is a signal peptide; that stretch reads MSLMTKLGFRALVASCLITAGSAANA. Residues 406–431 form a disordered region; sequence DGSAPPQILSVQGGSVREPSWGPFMQ.

The protein belongs to the TolB family. The Tol-Pal system is composed of five core proteins: the inner membrane proteins TolA, TolQ and TolR, the periplasmic protein TolB and the outer membrane protein Pal. They form a network linking the inner and outer membranes and the peptidoglycan layer.

Its subcellular location is the periplasm. Its function is as follows. Part of the Tol-Pal system, which plays a role in outer membrane invagination during cell division and is important for maintaining outer membrane integrity. In Burkholderia cenocepacia (strain ATCC BAA-245 / DSM 16553 / LMG 16656 / NCTC 13227 / J2315 / CF5610) (Burkholderia cepacia (strain J2315)), this protein is Tol-Pal system protein TolB.